The following is a 454-amino-acid chain: V-type ATP synthase subunit I 2 (454 aa).

The disordered stretch occupies residues 101 to 121 (EREGDAPSVPRGKSSVAHDSA). A run of 4 helical transmembrane segments spans residues 254-274 (LLFGIMFGDLGQGLLFFVLGL), 293-313 (VFLSVGFSSMVMGFLTGEFFA), 351-371 (MAFFGFTLFLGFVINSLGLII), and 424-444 (ACLSWVFFVKSFWSVCASVCV).

Belongs to the V-ATPase 116 kDa subunit family.

The protein localises to the cell membrane. Produces ATP from ADP in the presence of a proton gradient across the membrane. The protein is V-type ATP synthase subunit I 2 (atpI2) of Treponema pallidum (strain Nichols).